The following is a 183-amino-acid chain: Ribosome maturation factor RimM (183 aa).

A PRC barrel domain is found at 104 to 183; it reads EGDYYWKDLM…TIEVDWDPGF (80 aa).

This sequence belongs to the RimM family. As to quaternary structure, binds ribosomal protein uS19.

The protein resides in the cytoplasm. Functionally, an accessory protein needed during the final step in the assembly of 30S ribosomal subunit, possibly for assembly of the head region. Essential for efficient processing of 16S rRNA. May be needed both before and after RbfA during the maturation of 16S rRNA. It has affinity for free ribosomal 30S subunits but not for 70S ribosomes. This is Ribosome maturation factor RimM from Salmonella choleraesuis (strain SC-B67).